Here is a 541-residue protein sequence, read N- to C-terminus: Paromamine 6'-oxidase (541 aa).

Residues 1–29 form a disordered region; it reads MKRLRGTLPSDARHAWHPEPLGPAHRDGW. H470 serves as the catalytic Proton acceptor.

It belongs to the GMC oxidoreductase family. It depends on FAD as a cofactor.

It carries out the reaction 6'''-deamino-6'''-hydroxyneomycin C + O2 = 6'''-deamino-6'''-oxoneomycin C + H2O2. The enzyme catalyses paromamine + O2 = 6'-oxoparomamine + H2O2. The protein operates within antibiotic biosynthesis; neomycin biosynthesis. In terms of biological role, glucosaminyl-6'-oxidase involved in the biosynthetic pathway of neomycin by mediating FAD-dependent dehydrogenation of paromamine to 6'-dehydro-6'-oxoparomamine. Works in combination with neamine transaminase to replace the 6-hydroxy group of paromamine with an amino group. Also able to collaborate with neomycin C transaminase to replace the 6'''-hydroxy group of 6'''-hydroxyneomycin C with an amino group. The sequence is that of Paromamine 6'-oxidase (neoG) from Streptomyces fradiae (Streptomyces roseoflavus).